The primary structure comprises 961 residues: Zinc finger protein basonuclin-1 (961 aa).

Residues 210–219 form a hydrophobic region; sequence MTFMLPFQFF. 2 C2H2-type zinc fingers span residues 325–348 and 353–382; these read VFCTACEKTFYDKGTLKIHYNAVH and HKCTIEGCNMVFSSLRSRNRHSANPNPRLH. Residues 370-393 are disordered; the sequence is RNRHSANPNPRLHMPMNRNNRDKD. A Nuclear localization signal motif is present at residues 501–507; sequence PKKKSRK. A phosphoserine mark is found at Ser505 and Ser509. The disordered stretch occupies residues 523-572; that stretch reads EEKRHSLSSDDEVPLQVVSEDEPEDSSPRSDRVPEEQHTQLSLEEPLPQG. The span at 531–547 shows a compositional bias: acidic residues; that stretch reads SDDEVPLQVVSEDEPED. The span at 548–560 shows a compositional bias: basic and acidic residues; it reads SSPRSDRVPEEQH. 2 C2H2-type zinc fingers span residues 687–711 and 715–743; these read FQCDICKKTFKNACSMKTHEKNTHA and HACTVEGCGAAFPSRRSRDRHSSNLSLHQ. Residues 810–864 form a disordered region; it reads ESYNSGPPSEGTILDLSTTSSMKSESSSHSSWDSDGVSEEGTALMEDSDGNCEGQ. Residues 826–844 are compositionally biased toward low complexity; it reads STTSSMKSESSSHSSWDSD. 2 consecutive C2H2-type zinc fingers follow at residues 895–918 and 923–950; these read ITCHLCQKIYSNKGTFRAHYKTVH and HKCKVPGCNTMFSSVRSRNRHSQNPNLH. The tract at residues 937–961 is disordered; sequence VRSRNRHSQNPNLHKSLASSPSHLQ.

As to quaternary structure, interacts with HSF2BP (via C-terminus). Phosphorylation on Ser-505 and Ser-509 leads to cytoplasmic localization. Epidermis and germ cells of testis and ovary.

Its subcellular location is the nucleus. It is found in the cytoplasm. The protein localises to the nucleoplasm. In terms of biological role, transcriptional activator. It is likely involved in the regulation of keratinocytes terminal differentiation in squamous epithelia and hair follicles. Required for the maintenance of spermatogenesis. It is involved in the positive regulation of oocyte maturation, probably acting through the control of BMP15 levels and regulation of AKT signaling cascade. May also play a role in the early development of embryos. The protein is Zinc finger protein basonuclin-1 (Bnc1) of Mus musculus (Mouse).